We begin with the raw amino-acid sequence, 194 residues long: Holliday junction branch migration complex subunit RuvA (194 aa).

Residues M1 to A64 form a domain I region. Residues T65–A143 are domain II. The tract at residues A144 to A147 is flexible linker. The interval A147–K194 is domain III.

The protein belongs to the RuvA family. In terms of assembly, homotetramer. Forms an RuvA(8)-RuvB(12)-Holliday junction (HJ) complex. HJ DNA is sandwiched between 2 RuvA tetramers; dsDNA enters through RuvA and exits via RuvB. An RuvB hexamer assembles on each DNA strand where it exits the tetramer. Each RuvB hexamer is contacted by two RuvA subunits (via domain III) on 2 adjacent RuvB subunits; this complex drives branch migration. In the full resolvosome a probable DNA-RuvA(4)-RuvB(12)-RuvC(2) complex forms which resolves the HJ.

Its subcellular location is the cytoplasm. Its function is as follows. The RuvA-RuvB-RuvC complex processes Holliday junction (HJ) DNA during genetic recombination and DNA repair, while the RuvA-RuvB complex plays an important role in the rescue of blocked DNA replication forks via replication fork reversal (RFR). RuvA specifically binds to HJ cruciform DNA, conferring on it an open structure. The RuvB hexamer acts as an ATP-dependent pump, pulling dsDNA into and through the RuvAB complex. HJ branch migration allows RuvC to scan DNA until it finds its consensus sequence, where it cleaves and resolves the cruciform DNA. This chain is Holliday junction branch migration complex subunit RuvA, found in Neisseria gonorrhoeae (strain ATCC 700825 / FA 1090).